The chain runs to 114 residues: Dolichyl-diphosphooligosaccharide--protein glycosyltransferase subunit DAD1 (114 aa).

Over 1–30 (MPKAAGDAKLLIQSLNKAYAATPTNLKIID) the chain is Cytoplasmic. Residues 31-51 (LYVVFAVVTALLQVVYMGIVG) form a helical membrane-spanning segment. Position 52 (serine 52) is a topological domain, lumenal. The helical transmembrane segment at 53 to 73 (FPFNSFLSGVLSCIGTAVLAV) threads the bilayer. Topologically, residues 74–93 (CHRIQVNKDNKEFKDLAPER) are cytoplasmic. Residues 94–114 (AFADFVLCSLVLHLVIMNFLG) form a helical membrane-spanning segment.

Belongs to the DAD/OST2 family. In terms of assembly, component of the oligosaccharyltransferase (OST) complex.

It is found in the endoplasmic reticulum membrane. It functions in the pathway protein modification; protein glycosylation. In terms of biological role, subunit of the oligosaccharyl transferase (OST) complex that catalyzes the initial transfer of a defined glycan (Glc(3)Man(9)GlcNAc(2) in eukaryotes) from the lipid carrier dolichol-pyrophosphate to an asparagine residue within an Asn-X-Ser/Thr consensus motif in nascent polypeptide chains, the first step in protein N-glycosylation. N-glycosylation occurs cotranslationally and the complex associates with the Sec61 complex at the channel-forming translocon complex that mediates protein translocation across the endoplasmic reticulum (ER). All subunits are required for a maximal enzyme activity. The chain is Dolichyl-diphosphooligosaccharide--protein glycosyltransferase subunit DAD1 (DAD1) from Hordeum vulgare (Barley).